Consider the following 206-residue polypeptide: Small ribosomal subunit protein uS4A (206 aa).

An S4 RNA-binding domain is found at 98 to 164 (MRLDNVVYRL…EKFKTFAENP (67 aa)).

This sequence belongs to the universal ribosomal protein uS4 family. Part of the 30S ribosomal subunit. Contacts protein S5. The interaction surface between S4 and S5 is involved in control of translational fidelity.

In terms of biological role, one of the primary rRNA binding proteins, it binds directly to 16S rRNA where it nucleates assembly of the body of the 30S subunit. With S5 and S12 plays an important role in translational accuracy. The protein is Small ribosomal subunit protein uS4A of Clostridium botulinum (strain ATCC 19397 / Type A).